The following is a 384-amino-acid chain: F-box/kelch-repeat protein At3g44120 (384 aa).

The F-box domain maps to 1–46 (MTLPELPKDLVEEILCFVPATSLKRLRSSCKEWNRLFKDDKRFARK). Kelch repeat units lie at residues 156-202 (CNKS…RECF), 264-314 (SVLV…FLLD), and 352-384 (GVQTIGGYSPIIVNYVPSLGQIELAGSKRKRDY).

The protein is F-box/kelch-repeat protein At3g44120 of Arabidopsis thaliana (Mouse-ear cress).